Consider the following 276-residue polypeptide: Large ribosomal subunit protein uL2 (276 aa).

Disordered regions lie at residues 38-59 and 225-276; these read FQKS…GGHK and VMNP…RHKR. The span at 39 to 49 shows a compositional bias: polar residues; sequence QKSGRNNNGHI. The segment covering 50–59 has biased composition (basic residues); sequence TTRHKGGGHK.

It belongs to the universal ribosomal protein uL2 family. Part of the 50S ribosomal subunit. Forms a bridge to the 30S subunit in the 70S ribosome.

One of the primary rRNA binding proteins. Required for association of the 30S and 50S subunits to form the 70S ribosome, for tRNA binding and peptide bond formation. It has been suggested to have peptidyltransferase activity; this is somewhat controversial. Makes several contacts with the 16S rRNA in the 70S ribosome. This chain is Large ribosomal subunit protein uL2, found in Cupriavidus necator (strain ATCC 17699 / DSM 428 / KCTC 22496 / NCIMB 10442 / H16 / Stanier 337) (Ralstonia eutropha).